We begin with the raw amino-acid sequence, 360 residues long: C-C chemokine receptor type 4 (360 aa).

Topologically, residues 1–39 (MNATEVTDTTQDETVYNSYYFYESMPKPCTKEGIKAFGE) are extracellular. N-linked (GlcNAc...) asparagine glycosylation is present at asparagine 2. The helical transmembrane segment at 40–67 (VFLPPLYSLVFLLGLFGNSVVVLVLFKY) threads the bilayer. The Cytoplasmic segment spans residues 68–77 (KRLKSMTDVY). Residues 78-98 (LLNLAISDLLFVLSLPFWGYY) form a helical membrane-spanning segment. Residues 99–111 (AADQWVFGLGLCK) are Extracellular-facing. Cysteine 110 and cysteine 187 form a disulfide bridge. The chain crosses the membrane as a helical span at residues 112–133 (IVSWMYLVGFYSGIFFIMLMSI). The Cytoplasmic portion of the chain corresponds to 134–150 (DRYLAIVHAVFSLKART). A helical membrane pass occupies residues 151–175 (LTYGVITSLITWSVAVFASLPGLLF). The Extracellular portion of the chain corresponds to 176–206 (STCYTEHNHTYCKTQYSVNSTTWKVLSSLEI). Asparagine 183 and asparagine 194 each carry an N-linked (GlcNAc...) asparagine glycan. A helical membrane pass occupies residues 207-226 (NVLGLLIPLGIMLFCYSMII). The Cytoplasmic portion of the chain corresponds to 227–242 (RTLQHCKNEKKNRAVR). Residues 243–267 (MIFAVVVLFLGFWTPYNVVLFLETL) form a helical membrane-spanning segment. At 268–284 (VELEVLQDCTLERYLDY) the chain is on the extracellular side. Residues 285–308 (AIQATETLAFIHCCLNPVIYFFLG) form a helical membrane-spanning segment. The Cytoplasmic portion of the chain corresponds to 309 to 360 (EKFRKYITQLFRTCRGPLVLCKHCDFLQVYSADMSSSSYTQSTVDHDFRDAL).

The protein belongs to the G-protein coupled receptor 1 family. In natural killer cells, CCL22 binding induces phosphorylation on yet undefined Ser/Thr residues, most probably by beta-adrenergic receptor kinases 1 and 2. In terms of tissue distribution, expressed in the thymus, macrophages and T- and B-cells.

The protein resides in the cell membrane. High affinity receptor for the C-C type chemokines CCL17/TARC and CCL22/MDC. The activity of this receptor is mediated by G(i) proteins which activate a phosphatidylinositol-calcium second messenger system. Could play a role in lipopolysaccharide (LPS)-induced endotoxic shock. In the CNS, could mediate hippocampal-neuron survival. The sequence is that of C-C chemokine receptor type 4 (Ccr4) from Mus musculus (Mouse).